We begin with the raw amino-acid sequence, 210 residues long: MPVSARGAPDAEHWAWSEQTDKGRVVVLSGPSAVGKSTVVRCLRERVSNLHFSVSATTREPRPDEMDGVDYHFVSPARFQQLIDQGALLEWAEIHGGMHRSGTLAEPVRVAAAAGFPVLIEVDLAGARAVKKAMPEAIAVFLAPPSWEDLEARLVGRGTETPEAIRRRLETARIELAAQDDFDEVVVNRRLESACAELVSLLVGAVSGSA.

A Guanylate kinase-like domain is found at 23–203; that stretch reads GRVVVLSGPS…ACAELVSLLV (181 aa). 30-37 contacts ATP; sequence GPSAVGKS.

Belongs to the guanylate kinase family.

It localises to the cytoplasm. It catalyses the reaction GMP + ATP = GDP + ADP. In terms of biological role, essential for recycling GMP and indirectly, cGMP. This Mycobacterium leprae (strain TN) protein is Guanylate kinase (gmk).